A 631-amino-acid polypeptide reads, in one-letter code: ATP-dependent protease PrkA (631 aa).

Residue T217 is modified to Phosphothreonine. S219 carries the post-translational modification Phosphoserine.

This sequence belongs to the PrkA family. Post-translationally, phosphorylated by PrkC on two sites, Thr-217 and Ser-219, with the threonine being the major site of modification.

The protein resides in the forespore. Its subcellular location is the spore coat. It catalyses the reaction Hydrolysis of proteins in presence of ATP.. Hydrolase activity is regulated by phosphorylation by the Ser/Thr kinase PrkC, probably allowing fine control of sporulation. Phosphorylation by PrkC does not prevent ATP fixation but it inhibits specifically PrkA protease activity and down-regulates the sporulation processes. Hydrolase activity is inhibited by a protease inhibitor, phenylmethylsulfonyl fluoride (PMSF). Potential kinase activity requires the presence of MgCl(2) and is inhibited in the presence of MnCl(2). ATP-dependent protease that regulates sporulation. Is able to bind and hydrolyze ATP. This ATP-dependent protease activity is necessary for efficient sporulation of B.subtilis. In vitro, can hydrolyze alpha-casein, an exogenous substrate of Lon proteases, in an ATP-dependent manner. PrkA also modulates sporulation by negatively regulating the transcriptional regulator Hpr/ScoC to induce the expression of sigK. The control of sporulation mediated via the Hpr/ScoC regulator is probably indirect. PrkA was originally thought to be a protein kinase, as it has been shown to phosphorylate in vitro an unidentified 60 kDa protein from B.subtilis crude extracts at a serine residue. However, Zhang et al. did not observe autophosphorylation or kinase activity for this protein, suggesting that it may have lost its kinase activity during evolution or may be a pseudokinase. This Bacillus subtilis (strain 168) protein is ATP-dependent protease PrkA.